The primary structure comprises 460 residues: Orexin receptor type 2 (460 aa).

Residues 1–54 (MSSTKLEDSLPRRNWSSASELNETQEPFLNPTDYDDEEFLRYLWREYLHPKEYE) are Extracellular-facing. Residues N14 and N22 are each glycosylated (N-linked (GlcNAc...) asparagine). The segment at 33–49 (DYDDEEFLRYLWREYLH) is required for response to orexin-A. Residues 55-75 (WVLIAGYIIVFVVALIGNVLV) traverse the membrane as a helical segment. The Cytoplasmic segment spans residues 76–88 (CVAVWKNHHMRTV). Residues 89 to 110 (TNYFIVNLSLADVLVTITCLPA) traverse the membrane as a helical segment. The Extracellular portion of the chain corresponds to 111 to 127 (TLVVDITETWFFGQSLC). Residues C127 and C210 are joined by a disulfide bond. A helical transmembrane segment spans residues 128-150 (KVIPYLQTVSVSVSVLTLSCIAL). Over 151 to 170 (DRWYAICHPLMFKSTAKRAR) the chain is Cytoplasmic. Residues 171–191 (NSIVVIWIVSCIIMIPQAIVM) traverse the membrane as a helical segment. Topologically, residues 192–222 (ERSSMLPGLANKTTLFTVCDERWGGEVYPKM) are extracellular. N-linked (GlcNAc...) asparagine glycosylation occurs at N202. Residues 223–243 (YHICFFLVTYMAPLCLMVLAY) traverse the membrane as a helical segment. Over 244 to 304 (LQIFRKLWCR…QIRARRKTAR (61 aa)) the chain is Cytoplasmic. Residues 305–326 (MLMVVLLVFAICYLPISILNVL) traverse the membrane as a helical segment. Topologically, residues 327-342 (KRVFGMFTHTEDRETV) are extracellular. Residues 343–366 (YAWFTFSHWLVYANSAANPIIYNF) form a helical membrane-spanning segment. Residues 367–460 (LSGKFREEFK…SSLLSTWLEV (94 aa)) lie on the Cytoplasmic side of the membrane.

Belongs to the G-protein coupled receptor 1 family. As to expression, expressed in the brain in the cerebral cortex, septal nuclei, hippocampus, medial thalamic groups, dorsal and median raphe nuclei, and many hypothalamic nuclei including the tuberomammillary nucleus, dorsomedial hypothalamus, paraventricular hypothalamic nucleus, and ventral premammillary nucleus. Not detected in the spleen, lung, liver, skeletal muscle, kidney and testis. Orexin receptor mRNA expression has also been reported in the adrenal gland, enteric nervous system, and pancreas.

It localises to the cell membrane. Its function is as follows. Nonselective, high-affinity receptor for both orexin-A and orexin-B neuropeptides. Triggers an increase in cytoplasmic Ca(2+) levels in response to orexin-A binding. The chain is Orexin receptor type 2 (Hcrtr2) from Rattus norvegicus (Rat).